Reading from the N-terminus, the 211-residue chain is DNA-directed RNA polymerases I, II, and III subunit RPABC1 (211 aa).

This sequence belongs to the archaeal Rpo5/eukaryotic RPB5 RNA polymerase subunit family. In terms of assembly, component of the RNA polymerase I (Pol I), RNA polymerase II (Pol II) and RNA polymerase III (Pol III) complexes consisting of at least 13, 12 and 17 subunits, respectively. In RNA Pol II, this subunit is present in 2-fold molar excess over the other subunits.

The protein localises to the nucleus. In terms of biological role, DNA-dependent RNA polymerase catalyzes the transcription of DNA into RNA using the four ribonucleoside triphosphates as substrates. Common component of RNA polymerases I, II and III which synthesize ribosomal RNA precursors, mRNA precursors and many functional non-coding RNAs, and small RNAs, such as 5S rRNA and tRNAs, respectively. Pol II is the central component of the basal RNA polymerase II transcription machinery. Pols are composed of mobile elements that move relative to each other. In Pol II, RPB5 is part of the lower jaw surrounding the central large cleft and thought to grab the incoming DNA template. Seems to be the major component in this process. This chain is DNA-directed RNA polymerases I, II, and III subunit RPABC1, found in Caenorhabditis briggsae.